The chain runs to 311 residues: Aspartate carbamoyltransferase catalytic subunit (311 aa).

Positions 57 and 58 each coordinate carbamoyl phosphate. Lysine 86 lines the L-aspartate pocket. Residues arginine 107, histidine 135, and glutamine 138 each contribute to the carbamoyl phosphate site. 2 residues coordinate L-aspartate: arginine 168 and arginine 230. Carbamoyl phosphate-binding residues include leucine 269 and proline 270.

Belongs to the aspartate/ornithine carbamoyltransferase superfamily. ATCase family. As to quaternary structure, heterooligomer of catalytic and regulatory chains.

The enzyme catalyses carbamoyl phosphate + L-aspartate = N-carbamoyl-L-aspartate + phosphate + H(+). It participates in pyrimidine metabolism; UMP biosynthesis via de novo pathway; (S)-dihydroorotate from bicarbonate: step 2/3. Catalyzes the condensation of carbamoyl phosphate and aspartate to form carbamoyl aspartate and inorganic phosphate, the committed step in the de novo pyrimidine nucleotide biosynthesis pathway. This is Aspartate carbamoyltransferase catalytic subunit from Staphylothermus marinus (strain ATCC 43588 / DSM 3639 / JCM 9404 / F1).